Reading from the N-terminus, the 635-residue chain is 1-deoxy-D-xylulose-5-phosphate synthase (635 aa).

Residues His-72 and 113–115 (GHA) contribute to the thiamine diphosphate site. Mg(2+) is bound at residue Asp-144. Thiamine diphosphate is bound by residues 145 to 146 (GA), Asn-174, Tyr-286, and Glu-369. Asn-174 serves as a coordination point for Mg(2+).

It belongs to the transketolase family. DXPS subfamily. Homodimer. Mg(2+) is required as a cofactor. It depends on thiamine diphosphate as a cofactor.

The catalysed reaction is D-glyceraldehyde 3-phosphate + pyruvate + H(+) = 1-deoxy-D-xylulose 5-phosphate + CO2. It participates in metabolic intermediate biosynthesis; 1-deoxy-D-xylulose 5-phosphate biosynthesis; 1-deoxy-D-xylulose 5-phosphate from D-glyceraldehyde 3-phosphate and pyruvate: step 1/1. Its function is as follows. Catalyzes the acyloin condensation reaction between C atoms 2 and 3 of pyruvate and glyceraldehyde 3-phosphate to yield 1-deoxy-D-xylulose-5-phosphate (DXP). The chain is 1-deoxy-D-xylulose-5-phosphate synthase from Gloeothece citriformis (strain PCC 7424) (Cyanothece sp. (strain PCC 7424)).